The chain runs to 152 residues: Ribosome maturation factor RimP (152 aa).

It belongs to the RimP family.

It is found in the cytoplasm. Required for maturation of 30S ribosomal subunits. This Alteromonas mediterranea (strain DSM 17117 / CIP 110805 / LMG 28347 / Deep ecotype) protein is Ribosome maturation factor RimP.